We begin with the raw amino-acid sequence, 545 residues long: MDFKRLTAFFAIALVIMIGWEKMFPTPKPVPAPQQAAQKQAATASAEAALAPATPITVTTDTVQAVIDEKSGDLRRLTLLKYKATGDENKPFVLFGDGKEYTYVAQSELLDAQGNNILKGIGFSAPKKQYTLNGDTVEVRLSAPETNGLKIDKVYTFTKDSYLVNVRFDIANGSGQTANLSADYRIVRDHSEPEGQGYFTHSYVGPVVYTPEGNFQKVSFSDLDDDAKSGKSEAEYIRKTPTGWLGMIEHHFMSTWILQPKGGQSVCAAGDCRIDIKRRSDKLYSASVSVPLAAIQAGAKAETAVNLYAGPQTTSVIANIADNLQLAKDYGKVHWFASPLFWLLNQLHNIIGNWGWAIVVLTIIVKAVLYPLTNASYRSMAKMRAAAPKLQTIKEKYGDDRMAQQQAMMQLYKDEKINPLGGCLPMLLQIPVFIGLYWALFASVELRQAPWLGWITDLSRADPYYILPIIMAATMFAQTYLNPPPTDPMQAKMMKIMPLVFSVMFFFFPAGLVLYWVVNNLLTIAQQWHINRSIEKQRAQGEVVS.

4 helical membrane passes run 350–370 (IIGNWGWAIVVLTIIVKAVLY), 424–444 (LPMLLQIPVFIGLYWALFASV), 461–481 (ADPYYILPIIMAATMFAQTYL), and 498–518 (PLVFSVMFFFFPAGLVLYWVV).

The protein belongs to the OXA1/ALB3/YidC family. Type 1 subfamily. As to quaternary structure, interacts with the Sec translocase complex via SecD. Specifically interacts with transmembrane segments of nascent integral membrane proteins during membrane integration.

Its subcellular location is the cell inner membrane. Functionally, required for the insertion and/or proper folding and/or complex formation of integral membrane proteins into the membrane. Involved in integration of membrane proteins that insert both dependently and independently of the Sec translocase complex, as well as at least some lipoproteins. Aids folding of multispanning membrane proteins. This chain is Membrane protein insertase YidC, found in Neisseria gonorrhoeae (strain ATCC 700825 / FA 1090).